Reading from the N-terminus, the 172-residue chain is WW domain binding protein VOPP1 (172 aa).

An N-terminal signal peptide occupies residues 1-22; it reads MARPLGRVAALLLGLLMECTEA. Residues 23–60 lie on the Extracellular side of the membrane; the sequence is KKHCWYFEGLYPTYYICRSYEDCCGSRCCVRALSIQRL. Residues 61-81 traverse the membrane as a helical segment; sequence WYFWFLLMMGVLFCCGAGFFI. Residues 82 to 172 are Cytoplasmic-facing; sequence RRRMYPPPLI…PPYEQVVKDK (91 aa). The disordered stretch occupies residues 139-172; it reads QVQPNSPHGGTTYPPPPSYCNTPPPPYEQVVKDK. Residues 151-165 show a composition bias toward pro residues; that stretch reads YPPPPSYCNTPPPPY.

It belongs to the VOPP1/ECOP family. Interacts with WWOX (via WW domain).

The protein resides in the cytoplasmic vesicle membrane. It is found in the late endosome membrane. The protein localises to the lysosome membrane. Increases the transcriptional activity of NFKB1 by facilitating its nuclear translocation, DNA-binding and associated apoptotic response, when overexpressed. May sequester WWOX in lysosomal vesicles and thereby regulate WWOX role as tumor suppressor. This chain is WW domain binding protein VOPP1, found in Rattus norvegicus (Rat).